The sequence spans 344 residues: Dihydroorotase (344 aa).

Histidine 14 and histidine 16 together coordinate Zn(2+). Substrate-binding positions include 16–18 (HVR) and asparagine 42. Zn(2+) is bound by residues lysine 99, histidine 136, and histidine 174. Position 99 is an N6-carboxylysine (lysine 99). A substrate-binding site is contributed by histidine 136. Leucine 219 contacts substrate. Residue aspartate 247 coordinates Zn(2+). Aspartate 247 is an active-site residue. Substrate-binding residues include histidine 251 and alanine 263.

This sequence belongs to the metallo-dependent hydrolases superfamily. DHOase family. Class II DHOase subfamily. Homodimer. Zn(2+) is required as a cofactor.

It carries out the reaction (S)-dihydroorotate + H2O = N-carbamoyl-L-aspartate + H(+). The protein operates within pyrimidine metabolism; UMP biosynthesis via de novo pathway; (S)-dihydroorotate from bicarbonate: step 3/3. Its function is as follows. Catalyzes the reversible cyclization of carbamoyl aspartate to dihydroorotate. The chain is Dihydroorotase from Leptothrix cholodnii (strain ATCC 51168 / LMG 8142 / SP-6) (Leptothrix discophora (strain SP-6)).